We begin with the raw amino-acid sequence, 271 residues long: Formamidopyrimidine-DNA glycosylase (271 aa).

P2 (schiff-base intermediate with DNA) is an active-site residue. E3 (proton donor) is an active-site residue. The active-site Proton donor; for beta-elimination activity is the K57. The DNA site is built by H90, R109, and K151. The segment at 236–270 (HVYGRGGETCTQCGNLLSEIKLGQRATVFCGLCQP) adopts an FPG-type zinc-finger fold. Residue R260 is the Proton donor; for delta-elimination activity of the active site.

Belongs to the FPG family. Monomer. The cofactor is Zn(2+).

It carries out the reaction Hydrolysis of DNA containing ring-opened 7-methylguanine residues, releasing 2,6-diamino-4-hydroxy-5-(N-methyl)formamidopyrimidine.. The catalysed reaction is 2'-deoxyribonucleotide-(2'-deoxyribose 5'-phosphate)-2'-deoxyribonucleotide-DNA = a 3'-end 2'-deoxyribonucleotide-(2,3-dehydro-2,3-deoxyribose 5'-phosphate)-DNA + a 5'-end 5'-phospho-2'-deoxyribonucleoside-DNA + H(+). Involved in base excision repair of DNA damaged by oxidation or by mutagenic agents. Acts as a DNA glycosylase that recognizes and removes damaged bases. Has a preference for oxidized purines, such as 7,8-dihydro-8-oxoguanine (8-oxoG). Has AP (apurinic/apyrimidinic) lyase activity and introduces nicks in the DNA strand. Cleaves the DNA backbone by beta-delta elimination to generate a single-strand break at the site of the removed base with both 3'- and 5'-phosphates. The sequence is that of Formamidopyrimidine-DNA glycosylase from Shewanella loihica (strain ATCC BAA-1088 / PV-4).